A 971-amino-acid polypeptide reads, in one-letter code: Translation initiation factor IF-2 (971 aa).

Basic and acidic residues predominate over residues 48–63; it reads DHLRKSHGATDGDKRK. Disordered stretches follow at residues 48–86 and 100–381; these read DHLR…ARTI and DDVA…STFQ. The segment covering 105–114 has biased composition (low complexity); the sequence is GADQGQAQVA. Positions 121–181 are enriched in basic and acidic residues; that stretch reads ELKRREEEAR…EEEAATKRAA (61 aa). A compositionally biased stretch (low complexity) spans 182–202; that stretch reads AEVAAAQQQAAAQQAAAEQEA. A compositionally biased stretch (basic and acidic residues) spans 210–261; the sequence is DEARAAAERAAQREAAKKAEDAAREAADKARAEQEEISKRRAAAEAEARAIR. The segment covering 277–286 has biased composition (pro residues); it reads PPKPVEPPKP. Residues 304-326 are compositionally biased toward low complexity; that stretch reads ARPAVKKPAGAAAPATTQAPAGA. The span at 356 to 369 shows a compositional bias: gly residues; that stretch reads SSGGVDRGWRGGPK. The tr-type G domain maps to 471–640; it reads PRPPVVTVMG…LLQAEVLELK (170 aa). The G1 stretch occupies residues 480–487; sequence GHVDHGKT. 480 to 487 lines the GTP pocket; that stretch reads GHVDHGKT. The G2 stretch occupies residues 505–509; sequence GITQH. A G3 region spans residues 526–529; it reads DTPG. Residues 526–530 and 580–583 each bind GTP; these read DTPGH and NKID. The segment at 580 to 583 is G4; sequence NKID. A G5 region spans residues 616 to 618; the sequence is SAK.

It belongs to the TRAFAC class translation factor GTPase superfamily. Classic translation factor GTPase family. IF-2 subfamily.

The protein resides in the cytoplasm. One of the essential components for the initiation of protein synthesis. Protects formylmethionyl-tRNA from spontaneous hydrolysis and promotes its binding to the 30S ribosomal subunits. Also involved in the hydrolysis of GTP during the formation of the 70S ribosomal complex. The chain is Translation initiation factor IF-2 from Burkholderia orbicola (strain AU 1054).